Reading from the N-terminus, the 63-residue chain is Large ribosomal subunit protein bL28 (63 aa).

The protein belongs to the bacterial ribosomal protein bL28 family.

The protein is Large ribosomal subunit protein bL28 of Beutenbergia cavernae (strain ATCC BAA-8 / DSM 12333 / CCUG 43141 / JCM 11478 / NBRC 16432 / NCIMB 13614 / HKI 0122).